The following is a 181-amino-acid chain: Histone H1 (181 aa).

Disordered stretches follow at residues methionine 1 to proline 23 and threonine 81 to lysine 181. Residues lysine 8 to proline 19 are compositionally biased toward basic residues. The 75-residue stretch at threonine 20 to alanine 94 folds into the H15 domain. Basic residues-rich tracts occupy residues alanine 103–alanine 119 and lysine 145–lysine 181.

This sequence belongs to the histone H1/H5 family.

It is found in the nucleus. It localises to the chromosome. In terms of biological role, histones H1 are necessary for the condensation of nucleosome chains into higher-order structures. This is Histone H1 from Tigriopus californicus (Marine copepod).